A 133-amino-acid chain; its full sequence is ATP synthase epsilon chain, chloroplastic (133 aa).

The protein belongs to the ATPase epsilon chain family. In terms of assembly, F-type ATPases have 2 components, CF(1) - the catalytic core - and CF(0) - the membrane proton channel. CF(1) has five subunits: alpha(3), beta(3), gamma(1), delta(1), epsilon(1). CF(0) has three main subunits: a, b and c.

It is found in the plastid. The protein localises to the chloroplast thylakoid membrane. Its function is as follows. Produces ATP from ADP in the presence of a proton gradient across the membrane. This chain is ATP synthase epsilon chain, chloroplastic, found in Trieres chinensis (Marine centric diatom).